Consider the following 434-residue polypeptide: 4-hydroxy-3-methylbut-2-en-1-yl diphosphate synthase (flavodoxin) (434 aa).

The span at 1 to 15 shows a compositional bias: polar residues; it reads MQSEAQSPRSSQICS. Positions 1–20 are disordered; that stretch reads MQSEAQSPRSSQICSTEPVF. Cys322, Cys325, Cys368, and Glu375 together coordinate [4Fe-4S] cluster.

It belongs to the IspG family. [4Fe-4S] cluster is required as a cofactor.

The catalysed reaction is (2E)-4-hydroxy-3-methylbut-2-enyl diphosphate + oxidized [flavodoxin] + H2O + 2 H(+) = 2-C-methyl-D-erythritol 2,4-cyclic diphosphate + reduced [flavodoxin]. It participates in isoprenoid biosynthesis; isopentenyl diphosphate biosynthesis via DXP pathway; isopentenyl diphosphate from 1-deoxy-D-xylulose 5-phosphate: step 5/6. Functionally, converts 2C-methyl-D-erythritol 2,4-cyclodiphosphate (ME-2,4cPP) into 1-hydroxy-2-methyl-2-(E)-butenyl 4-diphosphate. This chain is 4-hydroxy-3-methylbut-2-en-1-yl diphosphate synthase (flavodoxin), found in Burkholderia mallei (strain ATCC 23344).